The chain runs to 255 residues: Indole-3-glycerol phosphate synthase (255 aa).

It belongs to the TrpC family.

The enzyme catalyses 1-(2-carboxyphenylamino)-1-deoxy-D-ribulose 5-phosphate + H(+) = (1S,2R)-1-C-(indol-3-yl)glycerol 3-phosphate + CO2 + H2O. It functions in the pathway amino-acid biosynthesis; L-tryptophan biosynthesis; L-tryptophan from chorismate: step 4/5. In Streptococcus mutans serotype c (strain ATCC 700610 / UA159), this protein is Indole-3-glycerol phosphate synthase.